Consider the following 81-residue polypeptide: Sulfur carrier protein TusA (81 aa).

The Cysteine persulfide intermediate role is filled by Cys-19.

It belongs to the sulfur carrier protein TusA family. In terms of assembly, interacts with IscS.

Its subcellular location is the cytoplasm. Its pathway is tRNA modification. Functionally, sulfur carrier protein involved in sulfur trafficking in the cell. Part of a sulfur-relay system required for 2-thiolation during synthesis of 2-thiouridine of the modified wobble base 5-methylaminomethyl-2-thiouridine (mnm(5)s(2)U) in tRNA. Interacts with IscS and stimulates its cysteine desulfurase activity. Accepts an activated sulfur from IscS, which is then transferred to TusD, and thus determines the direction of sulfur flow from IscS to 2-thiouridine formation. Also appears to be involved in sulfur transfer for the biosynthesis of molybdopterin. The sequence is that of Sulfur carrier protein TusA from Erwinia tasmaniensis (strain DSM 17950 / CFBP 7177 / CIP 109463 / NCPPB 4357 / Et1/99).